The chain runs to 821 residues: Cation/H(+) antiporter 15 (821 aa).

The next 13 helical transmembrane spans lie at 37–57 (LPLF…FVFI), 65–82 (RVIS…SVLG), 97–117 (VMVL…LVGV), 131–151 (ALTI…AFSF), 166–186 (ILFL…RILA), 200–220 (MSAA…AIAL), 228–248 (FASL…VFVV), 268–288 (FHIC…DAIG), 292–312 (VFGA…LTLI), 318–338 (FVSG…TNIA), 350–370 (FLVI…VAFF), 378–398 (GITL…VLNV), and 410–430 (FATM…IVTI). A disordered region spans residues 800–821 (DFPESPVHSHETKVTYGLENPR).

The protein belongs to the monovalent cation:proton antiporter 2 (CPA2) transporter (TC 2.A.37) family. CHX (TC 2.A.37.4) subfamily. Specifically expressed in pollen.

It is found in the membrane. Its function is as follows. May operate as a cation/H(+) antiporter. The protein is Cation/H(+) antiporter 15 (CHX15) of Arabidopsis thaliana (Mouse-ear cress).